A 324-amino-acid polypeptide reads, in one-letter code: Phthalate 4,5-dioxygenase oxygenase reductase subunit (324 aa).

One can recognise an FAD-binding FR-type domain in the interval 9–111 (DGFTGLKVIA…ATPQNEFELI (103 aa)). 115-229 (RQFIFVAGGI…PGSIHFESFG (115 aa)) lines the NAD(+) pocket. The 2Fe-2S ferredoxin-type domain occupies 241-324 (FSVTLGRSGI…ARNDVLVLDL (84 aa)). [2Fe-2S] cluster contacts are provided by Cys275, Cys280, Cys283, and Cys311.

The protein belongs to the PDR/VanB family. As to quaternary structure, this dioxygenase system consists of two proteins: phthalate oxygenase and phthalate oxygenase reductase. FMN is required as a cofactor.

The enzyme catalyses phthalate + NADH + O2 + H(+) = cis-4,5-dihydroxycyclohexa-2,6-diene-1,2-dicarboxylate + NAD(+). It participates in xenobiotic degradation; phthalate degradation; 3,4-dihydroxybenzoate from phthalate: step 1/3. In Pseudomonas putida (Arthrobacter siderocapsulatus), this protein is Phthalate 4,5-dioxygenase oxygenase reductase subunit (pht2).